Here is a 134-residue protein sequence, read N- to C-terminus: uncharacterized protein (134 aa).

A signal peptide spans Met-1–Gly-23. Residue Cys-24 is the site of N-palmitoyl cysteine attachment. Cys-24 is lipidated: S-diacylglycerol cysteine.

The protein resides in the cell membrane. This is an uncharacterized protein from Treponema pallidum (strain Nichols).